A 294-amino-acid chain; its full sequence is 4-hydroxy-tetrahydrodipicolinate synthase (294 aa).

Threonine 45 serves as a coordination point for pyruvate. Residue tyrosine 133 is the Proton donor/acceptor of the active site. The active-site Schiff-base intermediate with substrate is lysine 162. Valine 204 is a pyruvate binding site.

Belongs to the DapA family. As to quaternary structure, homotetramer; dimer of dimers.

It is found in the cytoplasm. The enzyme catalyses L-aspartate 4-semialdehyde + pyruvate = (2S,4S)-4-hydroxy-2,3,4,5-tetrahydrodipicolinate + H2O + H(+). It functions in the pathway amino-acid biosynthesis; L-lysine biosynthesis via DAP pathway; (S)-tetrahydrodipicolinate from L-aspartate: step 3/4. In terms of biological role, catalyzes the condensation of (S)-aspartate-beta-semialdehyde [(S)-ASA] and pyruvate to 4-hydroxy-tetrahydrodipicolinate (HTPA). This is 4-hydroxy-tetrahydrodipicolinate synthase from Bartonella bacilliformis (strain ATCC 35685 / KC583 / Herrer 020/F12,63).